Reading from the N-terminus, the 333-residue chain is Gap junction alpha-4 protein (333 aa).

Over 1–20 the chain is Cytoplasmic; the sequence is MGDWGFLEKLLDQVQEHSTV. A helical membrane pass occupies residues 21–40; sequence VGKIWLTVLFIFRILILGLA. At 41 to 76 the chain is on the extracellular side; the sequence is GESVWGDEQSDFECNTAQPGCTNVCYDQAFPISHIR. A helical transmembrane segment spans residues 77–99; sequence YWVLQFLFVSTPTLVYLGHVIYL. Residues 100 to 148 lie on the Cytoplasmic side of the membrane; sequence SRREERLRQKEGELRALPAKDPRVERALASIERQMAKISVAEDGHLRIR. The helical transmembrane segment at 149–165 threads the bilayer; the sequence is GALMGTYVASVLCKSVL. At 166 to 207 the chain is on the extracellular side; sequence EAGFLYGQWRLYGWTMEPVFVCQRSPCPYLVDCFVSRPTEKT. Residues 208-230 form a helical membrane-spanning segment; that stretch reads IFIIFMLVVGLISLVLNLLELAY. At 231 to 333 the chain is on the cytoplasmic side; the sequence is LLCRCLSRGV…SSSASKKQYV (103 aa). The disordered stretch occupies residues 303–333; the sequence is SRAPLFLDPPPQTGRKSPSRPSSSASKKQYV. Residues 317–333 show a composition bias toward low complexity; it reads RKSPSRPSSSASKKQYV.

It belongs to the connexin family. Alpha-type (group II) subfamily. As to quaternary structure, a connexon is composed of a hexamer of connexins.

It is found in the cell membrane. The protein localises to the cell junction. The protein resides in the gap junction. Functionally, one gap junction consists of a cluster of closely packed pairs of transmembrane channels, the connexons, through which materials of low MW diffuse from one cell to a neighboring cell. In Bos taurus (Bovine), this protein is Gap junction alpha-4 protein (GJA4).